We begin with the raw amino-acid sequence, 373 residues long: Carbamoyl phosphate synthase small chain (373 aa).

The segment at 1 to 179 is CPSase; the sequence is MSGKAQLVLE…AYIVEPEGPP (179 aa). The L-glutamine site is built by S47, G230, and G232. One can recognise a Glutamine amidotransferase type-1 domain in the interval 182–373; it reads TVAALDLGIK…QFIELMEGDR (192 aa). C258 serves as the catalytic Nucleophile. L-glutamine-binding residues include F259, Q262, N300, G302, and F303. Active-site residues include H348 and E350.

The protein belongs to the CarA family. In terms of assembly, composed of two chains; the small (or glutamine) chain promotes the hydrolysis of glutamine to ammonia, which is used by the large (or ammonia) chain to synthesize carbamoyl phosphate. Tetramer of heterodimers (alpha,beta)4.

It catalyses the reaction hydrogencarbonate + L-glutamine + 2 ATP + H2O = carbamoyl phosphate + L-glutamate + 2 ADP + phosphate + 2 H(+). It carries out the reaction L-glutamine + H2O = L-glutamate + NH4(+). Its pathway is amino-acid biosynthesis; L-arginine biosynthesis; carbamoyl phosphate from bicarbonate: step 1/1. It functions in the pathway pyrimidine metabolism; UMP biosynthesis via de novo pathway; (S)-dihydroorotate from bicarbonate: step 1/3. Small subunit of the glutamine-dependent carbamoyl phosphate synthetase (CPSase). CPSase catalyzes the formation of carbamoyl phosphate from the ammonia moiety of glutamine, carbonate, and phosphate donated by ATP, constituting the first step of 2 biosynthetic pathways, one leading to arginine and/or urea and the other to pyrimidine nucleotides. The small subunit (glutamine amidotransferase) binds and cleaves glutamine to supply the large subunit with the substrate ammonia. The protein is Carbamoyl phosphate synthase small chain of Mycolicibacterium paratuberculosis (strain ATCC BAA-968 / K-10) (Mycobacterium paratuberculosis).